The primary structure comprises 724 residues: Propionyl-CoA carboxylase alpha chain, mitochondrial (724 aa).

Residues M1–S48 constitute a mitochondrion transit peptide. The region spanning T58–P505 is the Biotin carboxylation domain. K61 carries the N6-acetyllysine; alternate modification. Position 61 is an N6-succinyllysine; alternate (K61). At K115 the chain carries N6-succinyllysine. Residue K146 is modified to N6-acetyllysine; alternate. An N6-succinyllysine; alternate modification is found at K146. An N6-acetyllysine modification is found at K150. K173 is an ATP binding site. An ATP-grasp domain is found at K177–K374. At K184 the chain carries N6-succinyllysine. The residue at position 196 (K196) is an N6-acetyllysine; alternate. K196 is subject to N6-succinyllysine; alternate. Residues A205–I266, E257, and N292 each bind ATP. S248 carries the phosphoserine modification. Position 258 is an N6-succinyllysine (K258). Residue K324 is modified to N6-acetyllysine; alternate. K324 is subject to N6-succinyllysine; alternate. Residues E332, E345, and N347 each contribute to the Mg(2+) site. E332, E345, and N347 together coordinate Mn(2+). R349 is a catalytic residue. K381 and K403 each carry N6-succinyllysine. F405 serves as a coordination point for biotin. K492 bears the N6-acetyllysine mark. Residues K498, K509, K554, and K644 each carry the N6-succinyllysine modification. The Biotinyl-binding domain occupies F645 to E724. K690 is subject to N6-biotinyllysine; by HLCS.

As to quaternary structure, the holoenzyme is a dodecamer composed of 6 PCCA/alpha subunits and 6 PCCB/beta subunits. Interacts (via the biotin carboxylation domain) with SIRT4. Interacts with SIRT3 and SIRT5. Mg(2+) serves as cofactor. The cofactor is Mn(2+). Biotin is required as a cofactor. Acetylated. In terms of processing, the biotin cofactor is covalently attached to the C-terminal biotinyl-binding domain and is required for the catalytic activity. Biotinylation is catalyzed by HLCS.

Its subcellular location is the mitochondrion matrix. It catalyses the reaction propanoyl-CoA + hydrogencarbonate + ATP = (S)-methylmalonyl-CoA + ADP + phosphate + H(+). It carries out the reaction butanoyl-CoA + hydrogencarbonate + ATP = (2S)-ethylmalonyl-CoA + ADP + phosphate + H(+). It functions in the pathway metabolic intermediate metabolism; propanoyl-CoA degradation; succinyl-CoA from propanoyl-CoA: step 1/3. Functionally, this is one of the 2 subunits of the biotin-dependent propionyl-CoA carboxylase (PCC), a mitochondrial enzyme involved in the catabolism of odd chain fatty acids, branched-chain amino acids isoleucine, threonine, methionine, and valine and other metabolites. Propionyl-CoA carboxylase catalyzes the carboxylation of propionyl-CoA/propanoyl-CoA to D-methylmalonyl-CoA/(S)-methylmalonyl-CoA. Within the holoenzyme, the alpha subunit catalyzes the ATP-dependent carboxylation of the biotin carried by the biotin carboxyl carrier (BCC) domain, while the beta subunit then transfers the carboxyl group from carboxylated biotin to propionyl-CoA. Propionyl-CoA carboxylase also significantly acts on butyryl-CoA/butanoyl-CoA, which is converted to ethylmalonyl-CoA/(2S)-ethylmalonyl-CoA. Other alternative minor substrates include (2E)-butenoyl-CoA/crotonoyl-CoA. This is Propionyl-CoA carboxylase alpha chain, mitochondrial from Mus musculus (Mouse).